The chain runs to 271 residues: Type III pantothenate kinase (271 aa).

Residue 6-13 coordinates ATP; sequence DVRNTHTV. 109-112 contributes to the substrate binding site; that stretch reads GADR. D111 functions as the Proton acceptor in the catalytic mechanism. D131 lines the K(+) pocket. ATP is bound at residue S134. T186 lines the substrate pocket.

It belongs to the type III pantothenate kinase family. Homodimer. The cofactor is NH4(+). K(+) serves as cofactor.

It localises to the cytoplasm. The enzyme catalyses (R)-pantothenate + ATP = (R)-4'-phosphopantothenate + ADP + H(+). It participates in cofactor biosynthesis; coenzyme A biosynthesis; CoA from (R)-pantothenate: step 1/5. Catalyzes the phosphorylation of pantothenate (Pan), the first step in CoA biosynthesis. This Mycobacteroides abscessus (strain ATCC 19977 / DSM 44196 / CCUG 20993 / CIP 104536 / JCM 13569 / NCTC 13031 / TMC 1543 / L948) (Mycobacterium abscessus) protein is Type III pantothenate kinase.